We begin with the raw amino-acid sequence, 243 residues long: ABC transporter arginine-binding protein 1 (243 aa).

Positions 1-19 (MKKLVLAALLASFTFGASA) are cleaved as a signal peptide.

Belongs to the bacterial solute-binding protein 3 family. The complex is composed of two ATP-binding proteins (ArtP), two transmembrane proteins (ArtM and ArtQ) and two solute-binding proteins (ArtJ and ArtI).

It is found in the periplasm. In terms of biological role, part of the ABC transporter complex ArtPIQMJ involved in arginine transport. Binds L-arginine with high affinity. The sequence is that of ABC transporter arginine-binding protein 1 (artJ) from Escherichia coli (strain K12).